The primary structure comprises 247 residues: MNVLPCSINTLKGLYEISGVEVGQHFYWQIGGFQVHAQVLITSWVVIAILLGSAAIAVRNPQTIPTDGQNFFEYVLEFIRDLSKTQIGEEYGPWVPFIGTMFLFIFVSNWSGALLPWKIIQLPHGELAAPTNDINTTVALALPTSVAYFYAGLTKKGLGYFGKYIQPTPILLPINILEDFTKPLSLSFRLFGNILADELVVVVLVSLVPSVVPIPVMFLGLFTSSIQALIFATLAAAYIGESMEGHH.

Helical transmembrane passes span 38-58, 95-115, 134-154, 199-219, and 220-240; these read QVLITSWVVIAILLGSAAIAV, VPFIGTMFLFIFVSNWSGALL, INTTVALALPTSVAYFYAGLT, LVVVVLVSLVPSVVPIPVMFL, and GLFTSSIQALIFATLAAAYIG.

It belongs to the ATPase A chain family. In terms of assembly, F-type ATPases have 2 components, CF(1) - the catalytic core - and CF(0) - the membrane proton channel. CF(1) has five subunits: alpha(3), beta(3), gamma(1), delta(1), epsilon(1). CF(0) has four main subunits: a, b, b' and c.

The protein localises to the plastid. The protein resides in the chloroplast thylakoid membrane. In terms of biological role, key component of the proton channel; it plays a direct role in the translocation of protons across the membrane. The sequence is that of ATP synthase subunit a, chloroplastic from Illicium oligandrum (Star anise).